Here is a 463-residue protein sequence, read N- to C-terminus: Ribulose bisphosphate carboxylase large chain (463 aa).

Lys5 bears the N6,N6,N6-trimethyllysine mark. Substrate contacts are provided by Asn114 and Thr164. Lys166 functions as the Proton acceptor in the catalytic mechanism. Lys168 is a binding site for substrate. Residues Lys192, Asp194, and Glu195 each coordinate Mg(2+). At Lys192 the chain carries N6-carboxylysine. His285 acts as the Proton acceptor in catalysis. The substrate site is built by Arg286, His318, and Ser370.

The protein belongs to the RuBisCO large chain family. Type I subfamily. Heterohexadecamer of 8 large chains and 8 small chains; disulfide-linked. The disulfide link is formed within the large subunit homodimers. The cofactor is Mg(2+). The disulfide bond which can form in the large chain dimeric partners within the hexadecamer appears to be associated with oxidative stress and protein turnover.

Its subcellular location is the plastid. The protein resides in the chloroplast. The enzyme catalyses 2 (2R)-3-phosphoglycerate + 2 H(+) = D-ribulose 1,5-bisphosphate + CO2 + H2O. The catalysed reaction is D-ribulose 1,5-bisphosphate + O2 = 2-phosphoglycolate + (2R)-3-phosphoglycerate + 2 H(+). RuBisCO catalyzes two reactions: the carboxylation of D-ribulose 1,5-bisphosphate, the primary event in carbon dioxide fixation, as well as the oxidative fragmentation of the pentose substrate in the photorespiration process. Both reactions occur simultaneously and in competition at the same active site. This Pelargonium grandiflorum (Geranium) protein is Ribulose bisphosphate carboxylase large chain.